A 111-amino-acid chain; its full sequence is uncharacterized protein (111 aa).

Belongs to the asfivirus E111R family.

This is an uncharacterized protein from Ornithodoros (relapsing fever ticks).